The sequence spans 399 residues: UDP-galactopyranose mutase (399 aa).

Phenylalanine 18, glutamate 38, asparagine 46, and leucine 66 together coordinate FAD. UDP-alpha-D-galactose-binding residues include phenylalanine 157, threonine 162, tryptophan 166, and tyrosine 191. 224-225 serves as a coordination point for FAD; the sequence is DW. 3 residues coordinate UDP-alpha-D-galactose: asparagine 282, arginine 292, and tyrosine 328. Position 360 (arginine 360) interacts with FAD. Tyrosine 366 lines the UDP-alpha-D-galactose pocket. Residue 367 to 369 coordinates FAD; the sequence is LDM.

The protein belongs to the UDP-galactopyranose/dTDP-fucopyranose mutase family. Homotetramer. FAD serves as cofactor.

The catalysed reaction is UDP-alpha-D-galactose = UDP-alpha-D-galactofuranose. It functions in the pathway cell wall biogenesis; cell wall polysaccharide biosynthesis. Functionally, catalyzes the interconversion through a 2-keto intermediate of uridine diphosphogalactopyranose (UDP-GalP) into uridine diphosphogalactofuranose (UDP-GalF) which is a key building block for cell wall construction in Mycobacterium tuberculosis. The protein is UDP-galactopyranose mutase (glf) of Mycobacterium tuberculosis (strain CDC 1551 / Oshkosh).